The chain runs to 491 residues: Argininosuccinate lyase (491 aa).

It belongs to the lyase 1 family. Argininosuccinate lyase subfamily.

The protein resides in the cytoplasm. The catalysed reaction is 2-(N(omega)-L-arginino)succinate = fumarate + L-arginine. It participates in amino-acid biosynthesis; L-arginine biosynthesis; L-arginine from L-ornithine and carbamoyl phosphate: step 3/3. In Methanosarcina mazei (strain ATCC BAA-159 / DSM 3647 / Goe1 / Go1 / JCM 11833 / OCM 88) (Methanosarcina frisia), this protein is Argininosuccinate lyase.